The primary structure comprises 208 residues: Ribonuclease HII (208 aa).

The RNase H type-2 domain occupies 18–208; the sequence is GFYAGVDEVG…RPVKERLEAC (191 aa). A divalent metal cation contacts are provided by Asp24, Glu25, and Asp116.

It belongs to the RNase HII family. Mn(2+) is required as a cofactor. Mg(2+) serves as cofactor.

The protein localises to the cytoplasm. It catalyses the reaction Endonucleolytic cleavage to 5'-phosphomonoester.. Endonuclease that specifically degrades the RNA of RNA-DNA hybrids. This Shewanella loihica (strain ATCC BAA-1088 / PV-4) protein is Ribonuclease HII.